Consider the following 124-residue polypeptide: Small ribosomal subunit protein uS12 (124 aa).

Asp-89 carries the post-translational modification 3-methylthioaspartic acid. Residues 104-124 (SAGVQNRNRGRSKYGTKRPKK) are disordered. Residues 111–124 (NRGRSKYGTKRPKK) are compositionally biased toward basic residues.

The protein belongs to the universal ribosomal protein uS12 family. In terms of assembly, part of the 30S ribosomal subunit. Contacts proteins S8 and S17. May interact with IF1 in the 30S initiation complex.

Its function is as follows. With S4 and S5 plays an important role in translational accuracy. Interacts with and stabilizes bases of the 16S rRNA that are involved in tRNA selection in the A site and with the mRNA backbone. Located at the interface of the 30S and 50S subunits, it traverses the body of the 30S subunit contacting proteins on the other side and probably holding the rRNA structure together. The combined cluster of proteins S8, S12 and S17 appears to hold together the shoulder and platform of the 30S subunit. The protein is Small ribosomal subunit protein uS12 of Desulforamulus reducens (strain ATCC BAA-1160 / DSM 100696 / MI-1) (Desulfotomaculum reducens).